The primary structure comprises 2435 residues: ATP-binding cassette sub-family A member 2 (2435 aa).

Residue Asn-14 is glycosylated (N-linked (GlcNAc...) asparagine). The next 2 helical transmembrane spans lie at 22 to 42 and 54 to 74; these read PWVLAFEIFIPLVLFFILLGL and AFYTAAPLTSAGILPVMQSLC. Residues Asn-89, Asn-168, and Asn-173 are each glycosylated (N-linked (GlcNAc...) asparagine). Residue Gln-271 is modified to N5-methylglutamine. N-linked (GlcNAc...) asparagine glycans are attached at residues Asn-305, Asn-368, Asn-379, Asn-420, Asn-432, Asn-476, Asn-484, Asn-494, Asn-530, Asn-544, Asn-590, Asn-600, and Asn-628. 6 consecutive transmembrane segments (helical) span residues 699–719, 750–770, 782–802, 813–833, 857–877, and 893–913; these read FLFVIEHMMPLCMVISWVYSV, VAWFITGFVQLSISVTALTAI, VVIIWLFLAVYAVATIMFCFL, ASACGGIIYFLSYVPYMYVAI, AFGLGSKYFALYEVAGVGIQW, and LLAVTMLMVDAVVYGILTWYI. An ABC transporter 1 domain is found at 990–1221; sequence VCVDKLTKVY…YGDGYRLTLV (232 aa). 1024-1031 contributes to the ATP binding site; sequence GHNGAGKT. 2 disordered regions span residues 1223-1243 and 1325-1357; these read RPAEPGGPQEPGLASSPPGRA and DQSLENSEADVKESRKDVLPGAEGPASGEGHAG. Phosphoserine occurs at positions 1238, 1327, and 1331. Residues 1333–1342 are compositionally biased toward basic and acidic residues; it reads ADVKESRKDV. N-linked (GlcNAc...) asparagine glycosylation is present at Asn-1408. Residues 1456–1476 form a helical membrane-spanning segment; sequence ALFSQILLPAFFVCVAMTVAL. Residues Asn-1496, Asn-1549, and Asn-1557 are each glycosylated (N-linked (GlcNAc...) asparagine). The tract at residues 1586–1610 is disordered; that stretch reads SNFVPPPPSPAPSDSPASPDEDLQA. The segment covering 1589–1598 has biased composition (pro residues); the sequence is VPPPPSPAPS. 3 N-linked (GlcNAc...) asparagine glycosylation sites follow: Asn-1612, Asn-1677, and Asn-1775. Transmembrane regions (helical) follow at residues 1792–1812, 1841–1861, 1872–1892, 1905–1925, and 1991–2011; these read VVIAIFIIVAMSFVPASFVVF, VWDMLNYLVPATCCVIILFVF, FPAVLSLFLLYGWSITPIMYP, VFLIVINLFIGITATVATFLL, and GLVAMAVEGVVGFLLTIMCQY. Residues 2050-2285 form the ABC transporter 2 domain; the sequence is VKIENLTKVY…FGDGYMITVR (236 aa). N-linked (GlcNAc...) asparagine glycosylation is present at Asn-2054. Residue 2087 to 2094 coordinates ATP; that stretch reads GVNGAGKT. The residue at position 2412 (Thr-2412) is a Phosphothreonine.

This sequence belongs to the ABC transporter superfamily. ABCA family. Post-translationally, methylated at Gln-271 by N6AMT1. In terms of tissue distribution, highly expressed in the brain,peripheral blood leukocytes and ovary, whereas lower levels of expression is observed in kidney and liver. As to expression, weakly expressed in brain and highly in peripheral blood leukocytes.

It is found in the endosome membrane. The protein localises to the lysosome membrane. In terms of biological role, probable lipid transporter that modulates cholesterol sequestration in the late endosome/lysosome by regulating the intracellular sphingolipid metabolism, in turn participates in cholesterol homeostasis. May alter the transbilayer distribution of ceramide in the intraluminal membrane lipid bilayer, favoring its retention in the outer leaflet that results in increased acid ceramidase activity in the late endosome/lysosome, facilitating ceramide deacylation to sphingosine leading to the sequestration of free cholesterol in lysosomes. In addition regulates amyloid-beta production either by activating a signaling pathway that regulates amyloid precursor protein transcription through the modulation of sphingolipid metabolism or through its role in gamma-secretase processing of APP. May play a role in myelin formation. The sequence is that of ATP-binding cassette sub-family A member 2 from Homo sapiens (Human).